The following is a 504-amino-acid chain: Signal recognition particle subunit SRP54 (504 aa).

The tract at residues 1 to 295 (MVLADLGRKI…KTQPFISKLL (295 aa)) is NG domain. GTP is bound by residues 108 to 115 (GLQGSGKT), 190 to 194 (DTSGR), and 248 to 251 (TKLD). Residues 296–504 (GMGDIEGLID…MKGMMGFNNM (209 aa)) are M-domain.

The protein belongs to the GTP-binding SRP family. SRP54 subfamily. As to quaternary structure, component of a signal recognition particle (SRP) complex that consists of a 7SL RNA molecule of 300 nucleotides and six protein subunits: SRP72, SRP68, SRP54, SRP19, SRP14 and SRP9. Interacts with RNPS1. Interacts with the SRP receptor subunit SRPRA.

The protein resides in the nucleus speckle. The protein localises to the cytoplasm. It is found in the endoplasmic reticulum. It carries out the reaction GTP + H2O = GDP + phosphate + H(+). Its function is as follows. Component of the signal recognition particle (SRP) complex, a ribonucleoprotein complex that mediates the cotranslational targeting of secretory and membrane proteins to the endoplasmic reticulum (ER). As part of the SRP complex, associates with the SRP receptor (SR) component SRPRA to target secretory proteins to the endoplasmic reticulum membrane. Binds to the signal sequence of presecretory proteins when they emerge from the ribosomes. Displays basal GTPase activity, and stimulates reciprocal GTPase activation of the SR subunit SRPRA. Forms a guanosine 5'-triphosphate (GTP)-dependent complex with the SR subunit SRPRA. SR compaction and GTPase mediated rearrangement of SR drive SRP-mediated cotranslational protein translocation into the ER. Requires the presence of SRP9/SRP14 and/or SRP19 to stably interact with RNA. Plays a role in proliferation and differentiation of granulocytic cells, neutrophils migration capacity and exocrine pancreas development. This chain is Signal recognition particle subunit SRP54, found in Homo sapiens (Human).